We begin with the raw amino-acid sequence, 148 residues long: PTS system fructose-like EIIA component (148 aa).

The region spanning 2-145 is the PTS EIIA type-2 domain; the sequence is AALTASCIDL…DQVLALLNQT (144 aa). His-64 acts as the Tele-phosphohistidine intermediate in catalysis. His-64 carries the phosphohistidine; by HPr modification.

It localises to the cytoplasm. Its function is as follows. The phosphoenolpyruvate-dependent sugar phosphotransferase system (sugar PTS), a major carbohydrate active transport system, catalyzes the phosphorylation of incoming sugar substrates concomitantly with their translocation across the cell membrane. The enzyme II FrvAB PTS system is involved in fructose transport. This is PTS system fructose-like EIIA component from Escherichia coli (strain K12).